Reading from the N-terminus, the 314-residue chain is Olfactory receptor 5D14 (314 aa).

Topologically, residues 1–27 are extracellular; the sequence is MMMVLRNLSMEPTFALLGFTDYPKLQI. N-linked (GlcNAc...) asparagine glycosylation is present at Asn-7. The helical transmembrane segment at 28–48 threads the bilayer; that stretch reads PLFLVFLLMYVITVVGNLGMI. Residues 49-56 lie on the Cytoplasmic side of the membrane; that stretch reads IIIKINPK. Residues 57 to 77 traverse the membrane as a helical segment; it reads FHTPMYFFLSHLSFVDFCYSS. Residues 78 to 101 are Extracellular-facing; it reads IVTPKLLENLVMADKSIFYFSCMM. A helical membrane pass occupies residues 102–122; the sequence is QYFLSCTAVVTESFLLAVMAY. Over 123–141 the chain is Cytoplasmic; the sequence is DRFVAICNPLLYTVAMSQR. Residues 142 to 162 form a helical membrane-spanning segment; it reads LCALLVAGSYLWGMFGPLVLL. Residues 163–198 lie on the Extracellular side of the membrane; that stretch reads CYALRLNFSGPNVINHFFCEYTALISVSGSDILIPH. An N-linked (GlcNAc...) asparagine glycan is attached at Asn-169. The helical transmembrane segment at 199–219 threads the bilayer; it reads LLLFSFATFNEMCTLLIILTS. Over 220-239 the chain is Cytoplasmic; the sequence is YVFIFVTVLKIRSVSGRHKA. Residues 240–260 form a helical membrane-spanning segment; sequence FSTWASHLTSITIFHGTILFL. The Extracellular portion of the chain corresponds to 261–273; sequence YCVPNSKNSRQTV. A helical transmembrane segment spans residues 274–294; it reads KVASVFYTVVNPMLNPLIYSL. Residues 295–314 lie on the Cytoplasmic side of the membrane; that stretch reads RNKDVKDAFWKLIHTQVPFH.

This sequence belongs to the G-protein coupled receptor 1 family.

It localises to the cell membrane. Functionally, odorant receptor. The sequence is that of Olfactory receptor 5D14 (OR5D14) from Homo sapiens (Human).